Consider the following 132-residue polypeptide: MSGGKSGGKAAVAKSAQSRSAKAGLAFPVGRVHRLLRKGNYAQRVGAGAPVYLAAVLEYLAAEILELAGNAARDNKKTRIIPRHLQLAIRNDEELNKLLGHVTIAQGGVVPNINAHLLPKTSGRTGKPSQEL.

Ser2 carries the post-translational modification N-acetylserine. 2 positions are modified to N6-acetyllysine: Lys5 and Lys9. The residue at position 106 (Gln106) is an N5-methylglutamine. Ser129 carries the post-translational modification Phosphoserine. The short motif at 129-130 (SQ) is the [ST]-Q motif element.

The protein belongs to the histone H2A family. In terms of assembly, the nucleosome is a histone octamer containing two molecules each of H2A, H2B, H3 and H4 assembled in one H3-H4 heterotetramer and two H2A-H2B heterodimers. The octamer wraps approximately 147 bp of DNA. Interacts with mdb1 (via BRCT domain) in vitro; this interaction requires phosphorylation of this protein at the S/T-Q motif. Phosphorylated to form H2AS128ph (gamma-H2A) in response to DNA double-strand breaks (DSBs) generated by exogenous genotoxic agents and by stalled replication forks. Phosphorylation is dependent on the DNA damage checkpoint kinases rad3/ATR and tel1/ATM, spreads on either side of a detected DSB site and may mark the surrounding chromatin for recruitment of proteins required for DNA damage signaling and repair. Gamma-H2A is required for recruiting crb2, a modulator of DNA damage checkpoint signaling, to DSB sites. Gamma-H2A is removed from the DNA prior to the strand invasion-primer extension step of the repair process and subsequently dephosphorylated. Dephosphorylation is necessary for efficient recovery from the DNA damage checkpoint. In terms of processing, acetylated by esa1 to form H2AK4ac and H2AK7ac.

The protein localises to the nucleus. It is found in the chromosome. Its function is as follows. Core component of nucleosome which plays a central role in DNA double strand break (DSB) repair. Nucleosomes wrap and compact DNA into chromatin, limiting DNA accessibility to the cellular machineries which require DNA as a template. Histones thereby play a central role in transcription regulation, DNA repair, DNA replication and chromosomal stability. DNA accessibility is regulated via a complex set of post-translational modifications of histones, also called histone code, and nucleosome remodeling. The sequence is that of Histone H2A-alpha (hta1) from Schizosaccharomyces pombe (strain 972 / ATCC 24843) (Fission yeast).